A 409-amino-acid polypeptide reads, in one-letter code: MARAKFERTKPHVNIGTIGHVDHGKTTLTAAITMTLAALGQAVAKGYDQIDNAPEEKARGITINTAHVEYETANRHYAHVDCPGHADYVKNMITGAAQMDGAILVVAATDGPMPQTREHILLAKQVGVPKLVVFLNKEDMMEDAELLELVELELRELLTEYEFDGDDIPIVRGSGLQALDVMTKNPKTQRGENPWVDKIYELMDAVDSYIPDPERDIDKPFLMAVEDVFSITGRGTVATGRIERGKVKVGDVVELVGIRDTRNTTVTGIEMFKKSLDEGMAGDNAGVLLRGIQKTDIERGMVLAKPGSITPHTQFEGEVYVLTEKEGGRKTPFFAGYRPQFYVRTTDVTGTIKAFTSDEGEAVEMVMPGDRIKVTVELINPIAIEQGMRFAIREGGRTIGAGVVSKIVK.

Residues 10 to 214 (KPHVNIGTIG…AVDSYIPDPE (205 aa)) enclose the tr-type G domain. The G1 stretch occupies residues 19-26 (GHVDHGKT). Residue 19 to 26 (GHVDHGKT) coordinates GTP. Thr26 contacts Mg(2+). The tract at residues 60–64 (GITIN) is G2. Residues 81–84 (DCPG) are G3. Residues 81 to 85 (DCPGH) and 136 to 139 (NKED) contribute to the GTP site. Positions 136-139 (NKED) are G4. Positions 174–176 (SGL) are G5.

This sequence belongs to the TRAFAC class translation factor GTPase superfamily. Classic translation factor GTPase family. EF-Tu/EF-1A subfamily. As to quaternary structure, monomer.

The protein resides in the cytoplasm. It catalyses the reaction GTP + H2O = GDP + phosphate + H(+). Its function is as follows. GTP hydrolase that promotes the GTP-dependent binding of aminoacyl-tRNA to the A-site of ribosomes during protein biosynthesis. This is Elongation factor Tu from Trichormus variabilis (strain ATCC 29413 / PCC 7937) (Anabaena variabilis).